The following is a 710-amino-acid chain: Choline transporter-like protein 5 (710 aa).

The disordered stretch occupies residues 1–21; sequence MARKRKPPSSQGDPRRYDPDF. At 1-32 the chain is on the cytoplasmic side; the sequence is MARKRKPPSSQGDPRRYDPDFQGPTAKRTCTD. The chain crosses the membrane as a helical span at residues 33–53; the sequence is VLCCLIFLLFILGYVLLGLLA. The Extracellular segment spans residues 54 to 236; that stretch reads WAHGDPRKMA…KLLEDYATSW (183 aa). Residues asparagine 82 and asparagine 184 are each glycosylated (N-linked (GlcNAc...) asparagine). The chain crosses the membrane as a helical span at residues 237–257; sequence KWILIGLTVAMALSWTFLILL. Residues 258–260 lie on the Cytoplasmic side of the membrane; the sequence is RFT. A helical transmembrane segment spans residues 261–281; that stretch reads AGFLFWFFIFGVLGIIGYGIW. Topologically, residues 282-319 are extracellular; sequence YCFLEYSSIQQRPQSTFWMYGFGIQRRVNMFFHLKETW. Residues 320–340 form a helical membrane-spanning segment; the sequence is FSMMIILSAIEIIIIIVLIFL. At 341–345 the chain is on the cytoplasmic side; that stretch reads RTRIQ. Residues 346–366 traverse the membrane as a helical segment; the sequence is VAIILLQEGSKAISYLPSALI. The Extracellular segment spans residues 367–368; that stretch reads YP. Residues 369-389 form a helical membrane-spanning segment; sequence VLTFILLSICISYWAVTAVFL. Residues 390–454 are Cytoplasmic-facing; sequence ATSGVPIFKV…NYILTFQVYN (65 aa). The chain crosses the membrane as a helical span at residues 455–475; sequence LFAFLWLINFVIALGQCALAG. At 476–509 the chain is on the extracellular side; it reads AFASYYWAMKKPDDIPPYPLFTAFGRAVRYHTGS. A helical membrane pass occupies residues 510-530; the sequence is LAFGSLILASVQMFKVIVEYL. The Cytoplasmic segment spans residues 531–604; that stretch reads DRRLKKAQNS…KVTVTDEVTY (74 aa). The chain crosses the membrane as a helical span at residues 605-625; it reads FVLLLGKVLVSGIVGVLAFLL. The Extracellular segment spans residues 626-643; that stretch reads FTERLQIIVDGPTTLNYY. Residues 644-664 traverse the membrane as a helical segment; it reads WVPFLTLVFGSYMIAHGFFSV. Over 665–710 the chain is Cytoplasmic; that stretch reads YSMCVETIFICFLEDLERNEGSPSRPYFVTPALMNILLEQGKIKKQ.

This sequence belongs to the CTL (choline transporter-like) family.

It is found in the cell membrane. It catalyses the reaction choline(out) + n H(+)(in) = choline(in) + n H(+)(out). Choline/H+ antiporter. This is Choline transporter-like protein 5 (Slc44a5) from Mus musculus (Mouse).